Consider the following 333-residue polypeptide: Dipeptide transport system permease protein DppB (333 aa).

6 consecutive transmembrane segments (helical) span residues 9-29, 103-123, 136-156, 197-217, 256-276, and 306-326; these read ILMV…LVHF, AFFA…IAAV, ASLT…ILYV, AVKS…AIIT, LIPV…GAVL, and VLII…LYGV. The ABC transmembrane type-1 domain maps to 96 to 328; sequence FPATAELAFF…TVDLLYGVVN (233 aa).

The protein belongs to the binding-protein-dependent transport system permease family. OppBC subfamily.

The protein localises to the cell inner membrane. In terms of biological role, part of the ABC transporter DppBCDF involved in dipeptide transport. Responsible for the translocation of the substrate across the membrane. The sequence is that of Dipeptide transport system permease protein DppB (dppB) from Haemophilus influenzae (strain ATCC 51907 / DSM 11121 / KW20 / Rd).